The following is a 445-amino-acid chain: Tubulin beta-9 chain (445 aa).

The GTP site is built by Gln11, Glu69, Ser138, Gly142, Thr143, Gly144, Asn204, and Asn226. Residue Glu69 coordinates Mg(2+). The interval 423-445 (QQYQDATADDEEYEEEEEYEAEA) is disordered. The span at 429 to 445 (TADDEEYEEEEEYEAEA) shows a compositional bias: acidic residues.

It belongs to the tubulin family. As to quaternary structure, dimer of alpha and beta chains. A typical microtubule is a hollow water-filled tube with an outer diameter of 25 nm and an inner diameter of 15 nM. Alpha-beta heterodimers associate head-to-tail to form protofilaments running lengthwise along the microtubule wall with the beta-tubulin subunit facing the microtubule plus end conferring a structural polarity. Microtubules usually have 13 protofilaments but different protofilament numbers can be found in some organisms and specialized cells. Mg(2+) is required as a cofactor.

It localises to the cytoplasm. It is found in the cytoskeleton. Functionally, tubulin is the major constituent of microtubules, a cylinder consisting of laterally associated linear protofilaments composed of alpha- and beta-tubulin heterodimers. Microtubules grow by the addition of GTP-tubulin dimers to the microtubule end, where a stabilizing cap forms. Below the cap, tubulin dimers are in GDP-bound state, owing to GTPase activity of alpha-tubulin. The protein is Tubulin beta-9 chain of Gossypium hirsutum (Upland cotton).